We begin with the raw amino-acid sequence, 597 residues long: Elongation factor 4 (597 aa).

In terms of domain architecture, tr-type G spans 2–184; sequence DHIRNFSIIA…SLIAKVPPPK (183 aa). Residues 14–19 and 131–134 contribute to the GTP site; these read DHGKST and NKID.

It belongs to the TRAFAC class translation factor GTPase superfamily. Classic translation factor GTPase family. LepA subfamily.

The protein localises to the cell inner membrane. The enzyme catalyses GTP + H2O = GDP + phosphate + H(+). Functionally, required for accurate and efficient protein synthesis under certain stress conditions. May act as a fidelity factor of the translation reaction, by catalyzing a one-codon backward translocation of tRNAs on improperly translocated ribosomes. Back-translocation proceeds from a post-translocation (POST) complex to a pre-translocation (PRE) complex, thus giving elongation factor G a second chance to translocate the tRNAs correctly. Binds to ribosomes in a GTP-dependent manner. This is Elongation factor 4 from Burkholderia cenocepacia (strain HI2424).